The chain runs to 674 residues: MIMGNIQNRIDYLRKELIRHNGLYYESNNPEISDSEYDNLAKELEQIEKENPLFALPDSPTKKISGFVSSSFEQIKHSSPMLSLDNTYSQKETAKWYERIEKNLNNKNTEFTIEPKIDGVSASLTYINGSLTAGATRGDGETGEDITENIKKVKNIPYKLKADNPPYFFELRGEVYIDKSDFRKLNEEILMSVGQKFANSRNAASGSLRQKNPQITAERKLRFFVHSLGKIDGKQFESQSDFLQYCRKCGFQLQDNFKICHSLKEIMDFMEIMINNRDLLHYEIDGLVIKVNSLQLQKELGYTNKSPRWAIAFKFPAKQATTKLSRIRVQVGRTGIITPSAILESVTLAGVTISHATLHNFEEIERLNVNEGDTVLIERAGDVIPKIVKVVKKENRGFFKPPHNCPSCNSGIVKENEEEVAYRCINPECPAQFRRHLIHFVSRNAMDIDGFGKAVIDQFLDRKKIQVLADIYYLKYDDFIKLDLFKEKKTSNLMKAVAASKKHPLSKLLFALGIRRIGEKVSEIIAKKFKSMEALFNASIEDFTRVPEIGSILALSLKEFFENKTVRNVIDNLIAAGVNMIEPEAEQSGTQFDGKMFVLTGELKNHTREQAGKIIRSLGGKVASSVSKKTDYIVAGVNAGSKLKKAKELNVKIVDEAEFDILTGKLSLIENTKF.

NAD(+) contacts are provided by residues 34 to 38, 83 to 84, and Glu114; these read DSEYD and SL. Lys116 acts as the N6-AMP-lysine intermediate in catalysis. NAD(+)-binding residues include Arg137, Glu174, Lys290, and Lys314. The Zn(2+) site is built by Cys405, Cys408, Cys424, and Cys429. A BRCT domain is found at 587-674; it reads QSGTQFDGKM…KLSLIENTKF (88 aa).

It belongs to the NAD-dependent DNA ligase family. LigA subfamily. It depends on Mg(2+) as a cofactor. The cofactor is Mn(2+).

It catalyses the reaction NAD(+) + (deoxyribonucleotide)n-3'-hydroxyl + 5'-phospho-(deoxyribonucleotide)m = (deoxyribonucleotide)n+m + AMP + beta-nicotinamide D-nucleotide.. DNA ligase that catalyzes the formation of phosphodiester linkages between 5'-phosphoryl and 3'-hydroxyl groups in double-stranded DNA using NAD as a coenzyme and as the energy source for the reaction. It is essential for DNA replication and repair of damaged DNA. The sequence is that of DNA ligase from Endomicrobium trichonymphae.